The sequence spans 673 residues: Putative lipase atg15 (673 aa).

The Cytoplasmic segment spans residues 1-7 (MPRKRSR). A helical; Signal-anchor for type II membrane protein transmembrane segment spans residues 8–28 (FELSIHSLLLSVAVLSGAAYA). Residues 29-673 (SGYYPPSQQV…AVTSAPTPTS (645 aa)) are Lumenal-facing. Residues N156, N191, N213, N271, and N295 are each glycosylated (N-linked (GlcNAc...) asparagine). S311 serves as the catalytic Charge relay system. The N-linked (GlcNAc...) asparagine glycan is linked to N457.

This sequence belongs to the AB hydrolase superfamily. Lipase family. In terms of assembly, binds to both phosphatidylinositol (PI) and phosphatidylinositol 3,5-bisphosphate (PIP2).

It localises to the endosome. Its subcellular location is the multivesicular body membrane. The protein localises to the prevacuolar compartment membrane. The catalysed reaction is a triacylglycerol + H2O = a diacylglycerol + a fatty acid + H(+). Lipase which is essential for lysis of subvacuolar cytoplasm to vacuole targeted bodies and intravacuolar autophagic bodies. Involved in the lysis of intravacuolar multivesicular body (MVB) vesicles. The intravacuolar membrane disintegration by atg15 is critical to life span extension. This is Putative lipase atg15 (atg15) from Penicillium rubens (strain ATCC 28089 / DSM 1075 / NRRL 1951 / Wisconsin 54-1255) (Penicillium chrysogenum).